A 682-amino-acid chain; its full sequence is Heat shock 70 kDa protein 10, mitochondrial (682 aa).

The transit peptide at 1 to 50 (MATAALLRSIRRREVVSSPFSAYRCLSSSGKASLNSSYLGQNFRSFSRAF) directs the protein to the mitochondrion. The disordered stretch occupies residues 646–682 (KIGEHMSGGSGGGSAPGGGSEGGSDQAPEAEYEEVKK). Over residues 651–667 (MSGGSGGGSAPGGGSEG) the composition is skewed to gly residues. The span at 673–682 (PEAEYEEVKK) shows a compositional bias: acidic residues.

This sequence belongs to the heat shock protein 70 (TC 1.A.33) family. DnaK subfamily.

The protein localises to the mitochondrion. In terms of biological role, chaperone involved in the maturation of iron-sulfur [Fe-S] cluster-containing proteins. Has a low intrinsic ATPase activity which is markedly stimulated by HSCB and ISU1. In cooperation with other chaperones, Hsp70s are key components that facilitate folding of de novo synthesized proteins, assist translocation of precursor proteins into organelles, and are responsible for degradation of damaged protein under stress conditions. The sequence is that of Heat shock 70 kDa protein 10, mitochondrial from Arabidopsis thaliana (Mouse-ear cress).